A 133-amino-acid polypeptide reads, in one-letter code: Large ribosomal subunit protein uL15 (133 aa).

Residues 1 to 60 (MALENLKPAQGSTKDRKRVGRGQGSGMGKTSTRGGKGQTARTGYKAKRGFEGGQQPLQRR) form a disordered region.

It belongs to the universal ribosomal protein uL15 family. In terms of assembly, part of the 50S ribosomal subunit.

Its function is as follows. Binds to the 23S rRNA. This chain is Large ribosomal subunit protein uL15, found in Wolinella succinogenes (strain ATCC 29543 / DSM 1740 / CCUG 13145 / JCM 31913 / LMG 7466 / NCTC 11488 / FDC 602W) (Vibrio succinogenes).